The chain runs to 149 residues: Protein OPG200 (149 aa).

It belongs to the orthopoxvirus OPG200 family. As to quaternary structure, homodimers. Interacts with host IKBKB; this interaction inhibits host NF-kappa-B activation.

Contributes to virulence by binding to the host IKBKB subunit of the IKK complex and preventing host NF-kappa-B activation in response to pro-inflammatory stimuli such as TNF-alpha or IL1B. Mechanistically, sterically hinders the direct contact between the kinase domains of IKBKB in the IKK complex containing IKBKB, CHUK/IKKA and NEMO. This Vaccinia virus (strain Western Reserve) (VACV) protein is Protein OPG200 (OPG200).